Consider the following 260-residue polypeptide: Thiazole synthase (260 aa).

Residue K96 is the Schiff-base intermediate with DXP of the active site. 1-deoxy-D-xylulose 5-phosphate contacts are provided by residues G157, 184–185 (AG), and 206–207 (NT).

The protein belongs to the ThiG family. Homotetramer. Forms heterodimers with either ThiH or ThiS.

The protein localises to the cytoplasm. The catalysed reaction is [ThiS sulfur-carrier protein]-C-terminal-Gly-aminoethanethioate + 2-iminoacetate + 1-deoxy-D-xylulose 5-phosphate = [ThiS sulfur-carrier protein]-C-terminal Gly-Gly + 2-[(2R,5Z)-2-carboxy-4-methylthiazol-5(2H)-ylidene]ethyl phosphate + 2 H2O + H(+). The protein operates within cofactor biosynthesis; thiamine diphosphate biosynthesis. Functionally, catalyzes the rearrangement of 1-deoxy-D-xylulose 5-phosphate (DXP) to produce the thiazole phosphate moiety of thiamine. Sulfur is provided by the thiocarboxylate moiety of the carrier protein ThiS. In vitro, sulfur can be provided by H(2)S. The polypeptide is Thiazole synthase (Rhodopseudomonas palustris (strain BisB5)).